Here is a 373-residue protein sequence, read N- to C-terminus: uncharacterized protein (373 aa).

The WSC domain maps to 15–101; that stretch reads DFTYLGCYSS…SDSYSVYVDE (87 aa). Disordered stretches follow at residues 101 to 171, 183 to 210, and 291 to 316; these read ESEE…SSLS, FSFSQSSSSSSTTSSSTPSSESVRITTS, and NLSEKRASSILASSSRQPPAGSRGAA. Composition is skewed to low complexity over residues 110–171 and 183–204; these read SSAQ…SSLS and FSFSQSSSSSSTTSSSTPSSES.

This is an uncharacterized protein from Pichia angusta (Yeast).